A 575-amino-acid polypeptide reads, in one-letter code: Regulatory protein zeste (575 aa).

Positions 1 to 26 (MSAQGEGGGAGGSGGGGAGSDGGGNA) are enriched in gly residues. 2 disordered regions span residues 1–53 (MSAQ…LPLT) and 151–174 (SVASAVPQQQQQQHHQQHDSVKVE). Residues 2 to 47 (SAQGEGGGAGGSGGGGAGSDGGGNAGQSSTGSGTVAVTNGGNSSAK) are hydrophobic. A compositionally biased stretch (polar residues) spans 31-51 (TGSGTVAVTNGGNSSAKNQLP). A DNA-binding region spans residues 48-128 (NQLPLTPRFT…WLNSRLRKQY (81 aa)). Positions 151 to 164 (SVASAVPQQQQQQH) are enriched in low complexity.

As to quaternary structure, self-associates forming complexes of several hundred monomers.

The protein resides in the nucleus. Its function is as follows. Involved in transvection phenomena (= synapsis-dependent gene expression), where the synaptic pairing of chromosomes carrying genes with which zeste interacts influences the expression of these genes. Zeste binds to DNA and stimulates transcription from a nearby promoter. In Drosophila melanogaster (Fruit fly), this protein is Regulatory protein zeste (z).